A 127-amino-acid chain; its full sequence is Small ribosomal subunit protein uS13 (127 aa).

Residues 100–127 (GQRTRTNARTRKGVRKTVAGKKKAPAKK) form a disordered region. Positions 101–127 (QRTRTNARTRKGVRKTVAGKKKAPAKK) are enriched in basic residues.

This sequence belongs to the universal ribosomal protein uS13 family. In terms of assembly, part of the 30S ribosomal subunit. Forms a loose heterodimer with protein S19. Forms two bridges to the 50S subunit in the 70S ribosome.

Functionally, located at the top of the head of the 30S subunit, it contacts several helices of the 16S rRNA. In the 70S ribosome it contacts the 23S rRNA (bridge B1a) and protein L5 of the 50S subunit (bridge B1b), connecting the 2 subunits; these bridges are implicated in subunit movement. Contacts the tRNAs in the A and P-sites. This is Small ribosomal subunit protein uS13 from Synechococcus sp. (strain JA-3-3Ab) (Cyanobacteria bacterium Yellowstone A-Prime).